Here is a 210-residue protein sequence, read N- to C-terminus: Peptidyl-tRNA hydrolase (210 aa).

Tyr-14 provides a ligand contact to tRNA. His-19 (proton acceptor) is an active-site residue. Residues Phe-64, Asn-66, and Asn-112 each coordinate tRNA.

This sequence belongs to the PTH family. As to quaternary structure, monomer.

Its subcellular location is the cytoplasm. The catalysed reaction is an N-acyl-L-alpha-aminoacyl-tRNA + H2O = an N-acyl-L-amino acid + a tRNA + H(+). In terms of biological role, hydrolyzes ribosome-free peptidyl-tRNAs (with 1 or more amino acids incorporated), which drop off the ribosome during protein synthesis, or as a result of ribosome stalling. Catalyzes the release of premature peptidyl moieties from peptidyl-tRNA molecules trapped in stalled 50S ribosomal subunits, and thus maintains levels of free tRNAs and 50S ribosomes. This is Peptidyl-tRNA hydrolase from Methylorubrum populi (strain ATCC BAA-705 / NCIMB 13946 / BJ001) (Methylobacterium populi).